The chain runs to 205 residues: Large ribosomal subunit protein uL4 (205 aa).

This sequence belongs to the universal ribosomal protein uL4 family. Part of the 50S ribosomal subunit.

In terms of biological role, one of the primary rRNA binding proteins, this protein initially binds near the 5'-end of the 23S rRNA. It is important during the early stages of 50S assembly. It makes multiple contacts with different domains of the 23S rRNA in the assembled 50S subunit and ribosome. Functionally, forms part of the polypeptide exit tunnel. The chain is Large ribosomal subunit protein uL4 from Roseobacter denitrificans (strain ATCC 33942 / OCh 114) (Erythrobacter sp. (strain OCh 114)).